A 138-amino-acid chain; its full sequence is Protein FAM136A (138 aa).

Position 2 is an N-acetylalanine (alanine 2). Threonine 124 and threonine 126 each carry phosphothreonine.

The protein belongs to the FAM136 family.

In Rattus norvegicus (Rat), this protein is Protein FAM136A (Fam136a).